The following is a 152-amino-acid chain: Cell division protein SepF (152 aa).

Positions glutamate 25–valine 54 are disordered. Residues glutamate 28–phenylalanine 42 show a composition bias toward basic and acidic residues.

It belongs to the SepF family. As to quaternary structure, homodimer. Interacts with FtsZ.

It localises to the cytoplasm. Functionally, cell division protein that is part of the divisome complex and is recruited early to the Z-ring. Probably stimulates Z-ring formation, perhaps through the cross-linking of FtsZ protofilaments. Its function overlaps with FtsA. The protein is Cell division protein SepF of Bacillus pumilus (strain SAFR-032).